Consider the following 415-residue polypeptide: Squalene synthase 2 (415 aa).

The next 2 membrane-spanning stretches (helical) occupy residues 281–301 (AIFR…ALCY) and 392–412 (LIVI…SNLP).

This sequence belongs to the phytoene/squalene synthase family. Requires Mg(2+) as cofactor. The cofactor is Mn(2+).

Its subcellular location is the endoplasmic reticulum membrane. It catalyses the reaction 2 (2E,6E)-farnesyl diphosphate + NADH + H(+) = squalene + 2 diphosphate + NAD(+). It carries out the reaction 2 (2E,6E)-farnesyl diphosphate + NADPH + H(+) = squalene + 2 diphosphate + NADP(+). The protein operates within terpene metabolism; lanosterol biosynthesis; lanosterol from farnesyl diphosphate: step 1/3. In terms of biological role, component of the triterpene saponins (e.g. ginsenosides or panaxosides) and phytosterols biosynthetic pathways. Catalyzes the biosynthesis of squalene. This Panax ginseng (Korean ginseng) protein is Squalene synthase 2.